The chain runs to 186 residues: Guanylate kinase (186 aa).

One can recognise a Guanylate kinase-like domain in the interval 5-183 (GNLTVLTGPS…AFKEIEGFMG (179 aa)). 12-19 (GPSGVGKG) contributes to the ATP binding site.

It belongs to the guanylate kinase family.

The protein localises to the cytoplasm. It catalyses the reaction GMP + ATP = GDP + ADP. Essential for recycling GMP and indirectly, cGMP. This chain is Guanylate kinase, found in Prochlorococcus marinus (strain NATL2A).